The chain runs to 450 residues: Methylenetetrahydrofolate--tRNA-(uracil-5-)-methyltransferase TrmFO (450 aa).

Residue 10 to 15 (GGGLAG) coordinates FAD.

This sequence belongs to the MnmG family. TrmFO subfamily. FAD is required as a cofactor.

The protein resides in the cytoplasm. It carries out the reaction uridine(54) in tRNA + (6R)-5,10-methylene-5,6,7,8-tetrahydrofolate + NADH + H(+) = 5-methyluridine(54) in tRNA + (6S)-5,6,7,8-tetrahydrofolate + NAD(+). The catalysed reaction is uridine(54) in tRNA + (6R)-5,10-methylene-5,6,7,8-tetrahydrofolate + NADPH + H(+) = 5-methyluridine(54) in tRNA + (6S)-5,6,7,8-tetrahydrofolate + NADP(+). Its function is as follows. Catalyzes the folate-dependent formation of 5-methyl-uridine at position 54 (M-5-U54) in all tRNAs. In Anaeromyxobacter dehalogenans (strain 2CP-C), this protein is Methylenetetrahydrofolate--tRNA-(uracil-5-)-methyltransferase TrmFO.